The primary structure comprises 132 residues: Small ribosomal subunit protein uS9 (132 aa).

Residues Asn103 to Arg132 form a disordered region. The segment covering Glu114 to Arg132 has biased composition (basic residues).

Belongs to the universal ribosomal protein uS9 family.

This chain is Small ribosomal subunit protein uS9, found in Dehalococcoides mccartyi (strain CBDB1).